A 203-amino-acid chain; its full sequence is Urease accessory protein UreG (203 aa).

Position 10 to 17 (G10 to T17) interacts with GTP.

This sequence belongs to the SIMIBI class G3E GTPase family. UreG subfamily. In terms of assembly, homodimer. UreD, UreF and UreG form a complex that acts as a GTP-hydrolysis-dependent molecular chaperone, activating the urease apoprotein by helping to assemble the nickel containing metallocenter of UreC. The UreE protein probably delivers the nickel.

It localises to the cytoplasm. Facilitates the functional incorporation of the urease nickel metallocenter. This process requires GTP hydrolysis, probably effectuated by UreG. This Micrococcus luteus (strain ATCC 4698 / DSM 20030 / JCM 1464 / CCM 169 / CCUG 5858 / IAM 1056 / NBRC 3333 / NCIMB 9278 / NCTC 2665 / VKM Ac-2230) (Micrococcus lysodeikticus) protein is Urease accessory protein UreG.